Reading from the N-terminus, the 298-residue chain is Protease HtpX homolog (298 aa).

The next 2 membrane-spanning stretches (helical) occupy residues 16–36 and 38–58; these read VMFG…YLFW and SWVS…LIMI. Zn(2+) is bound at residue H144. E145 is an active-site residue. Residue H148 coordinates Zn(2+). Helical transmembrane passes span 159-179 and 197-217; these read IALA…NWFW and IIGL…ASIA. Position 226 (E226) interacts with Zn(2+).

Belongs to the peptidase M48B family. Zn(2+) is required as a cofactor.

The protein localises to the cell membrane. The chain is Protease HtpX homolog from Levilactobacillus brevis (strain ATCC 367 / BCRC 12310 / CIP 105137 / JCM 1170 / LMG 11437 / NCIMB 947 / NCTC 947) (Lactobacillus brevis).